The sequence spans 605 residues: Condensin-2 complex subunit H2 (605 aa).

Residue threonine 19 is modified to Phosphothreonine. Serine 95, serine 200, serine 208, serine 228, and serine 232 each carry phosphoserine. Residues 194 to 331 (LEPEGMSPME…PFDSLESKPF (138 aa)) form a disordered region. Positions 256–266 (GEDEDAEEAVE) are enriched in acidic residues. Phosphoserine occurs at positions 282, 284, 466, and 492.

This sequence belongs to the CND2 H2 (condensin-2 subunit 2) family. In terms of assembly, component of the condensin-2 complex, which contains the SMC2 and SMC4 heterodimer, and three non SMC subunits, NCAPG2, NCAPH2 and NCAPD3 that probably regulate the complex.

The protein localises to the nucleus. It localises to the chromosome. Regulatory subunit of the condensin-2 complex, a complex that seems to provide chromosomes with an additional level of organization and rigidity and in establishing mitotic chromosome architecture. May promote the resolution of double-strand DNA catenanes (intertwines) between sister chromatids. Condensin-mediated compaction likely increases tension in catenated sister chromatids, providing directionality for type II topoisomerase-mediated strand exchanges toward chromatid decatenation. Required for decatenation of chromatin bridges at anaphase. Early in neurogenesis, may play an essential role to ensure accurate mitotic chromosome condensation in neuron stem cells, ultimately affecting neuron pool and cortex size. Seems to have lineage-specific role in T-cell development. The chain is Condensin-2 complex subunit H2 (NCAPH2) from Homo sapiens (Human).